A 269-amino-acid chain; its full sequence is Formamidopyrimidine-DNA glycosylase (269 aa).

Proline 2 serves as the catalytic Schiff-base intermediate with DNA. Glutamate 3 acts as the Proton donor in catalysis. The active-site Proton donor; for beta-elimination activity is the lysine 57. DNA-binding residues include histidine 90, arginine 109, and lysine 150. Residues 235–269 form an FPG-type zinc finger; that stretch reads QVYGRHGEPCYTCGEFIQIAKYGQRSSFFCPSCQN. The Proton donor; for delta-elimination activity role is filled by arginine 259.

Belongs to the FPG family. Monomer. It depends on Zn(2+) as a cofactor.

The catalysed reaction is Hydrolysis of DNA containing ring-opened 7-methylguanine residues, releasing 2,6-diamino-4-hydroxy-5-(N-methyl)formamidopyrimidine.. The enzyme catalyses 2'-deoxyribonucleotide-(2'-deoxyribose 5'-phosphate)-2'-deoxyribonucleotide-DNA = a 3'-end 2'-deoxyribonucleotide-(2,3-dehydro-2,3-deoxyribose 5'-phosphate)-DNA + a 5'-end 5'-phospho-2'-deoxyribonucleoside-DNA + H(+). Functionally, involved in base excision repair of DNA damaged by oxidation or by mutagenic agents. Acts as a DNA glycosylase that recognizes and removes damaged bases. Has a preference for oxidized purines, such as 7,8-dihydro-8-oxoguanine (8-oxoG). Has AP (apurinic/apyrimidinic) lyase activity and introduces nicks in the DNA strand. Cleaves the DNA backbone by beta-delta elimination to generate a single-strand break at the site of the removed base with both 3'- and 5'-phosphates. The polypeptide is Formamidopyrimidine-DNA glycosylase (Baumannia cicadellinicola subsp. Homalodisca coagulata).